The primary structure comprises 381 residues: Meiotic recombination protein SPO11-1 (381 aa).

A Topo IIA-type catalytic domain is found at 23 to 162 (EEAATLLHRI…LNVVPVAKGL (140 aa)). Tyr-123 serves as the catalytic O-(5'-phospho-DNA)-tyrosine intermediate. Mg(2+) contacts are provided by Glu-209 and Asp-261.

It belongs to the TOP6A family. Mg(2+) serves as cofactor. In terms of tissue distribution, highly expressed in flowers before pollination. Expressed in roots and shoots.

It is found in the nucleus. It carries out the reaction ATP-dependent breakage, passage and rejoining of double-stranded DNA.. Functionally, required for meiotic recombination. Mediates DNA cleavage that forms the double-strand breaks (DSB) that initiate meiotic recombination. May be involved in plant growth and development, and stress tolerance. The sequence is that of Meiotic recombination protein SPO11-1 (SPO11-1) from Oryza sativa subsp. indica (Rice).